A 265-amino-acid polypeptide reads, in one-letter code: Phosphatidylserine decarboxylase proenzyme (265 aa).

The Schiff-base intermediate with substrate; via pyruvic acid role is filled by Ser183. Ser183 is modified (pyruvic acid (Ser); by autocatalysis). A disordered region spans residues 216–246; the sequence is TAPQTESEPESEPALQTAPVETAANPSAEQR.

The protein belongs to the phosphatidylserine decarboxylase family. PSD-A subfamily. Heterodimer of a large membrane-associated beta subunit and a small pyruvoyl-containing alpha subunit. Requires pyruvate as cofactor. In terms of processing, is synthesized initially as an inactive proenzyme. Formation of the active enzyme involves a self-maturation process in which the active site pyruvoyl group is generated from an internal serine residue via an autocatalytic post-translational modification. Two non-identical subunits are generated from the proenzyme in this reaction, and the pyruvate is formed at the N-terminus of the alpha chain, which is derived from the carboxyl end of the proenzyme. The post-translation cleavage follows an unusual pathway, termed non-hydrolytic serinolysis, in which the side chain hydroxyl group of the serine supplies its oxygen atom to form the C-terminus of the beta chain, while the remainder of the serine residue undergoes an oxidative deamination to produce ammonia and the pyruvoyl prosthetic group on the alpha chain.

The protein resides in the cell membrane. It carries out the reaction a 1,2-diacyl-sn-glycero-3-phospho-L-serine + H(+) = a 1,2-diacyl-sn-glycero-3-phosphoethanolamine + CO2. The protein operates within phospholipid metabolism; phosphatidylethanolamine biosynthesis; phosphatidylethanolamine from CDP-diacylglycerol: step 2/2. Functionally, catalyzes the formation of phosphatidylethanolamine (PtdEtn) from phosphatidylserine (PtdSer). The polypeptide is Phosphatidylserine decarboxylase proenzyme (Neisseria meningitidis serogroup B (strain ATCC BAA-335 / MC58)).